The following is a 434-amino-acid chain: Histidinol dehydrogenase (434 aa).

NAD(+) is bound by residues Y130, Q188, and N211. 3 residues coordinate substrate: S237, Q259, and H262. 2 residues coordinate Zn(2+): Q259 and H262. Catalysis depends on proton acceptor residues E326 and H327. Positions 327, 360, 414, and 419 each coordinate substrate. Zn(2+) is bound at residue D360. Position 419 (H419) interacts with Zn(2+).

Belongs to the histidinol dehydrogenase family. In terms of assembly, homodimer. The cofactor is Zn(2+).

The enzyme catalyses L-histidinol + 2 NAD(+) + H2O = L-histidine + 2 NADH + 3 H(+). The protein operates within amino-acid biosynthesis; L-histidine biosynthesis; L-histidine from 5-phospho-alpha-D-ribose 1-diphosphate: step 9/9. In terms of biological role, catalyzes the sequential NAD-dependent oxidations of L-histidinol to L-histidinaldehyde and then to L-histidine. The polypeptide is Histidinol dehydrogenase (Escherichia coli O157:H7).